Reading from the N-terminus, the 139-residue chain is Nucleoside diphosphate kinase (139 aa).

Positions 10, 58, 86, 92, 103, and 113 each coordinate ATP. The active-site Pros-phosphohistidine intermediate is histidine 116.

The protein belongs to the NDK family. In terms of assembly, homotetramer. Requires Mg(2+) as cofactor.

Its subcellular location is the cytoplasm. It carries out the reaction a 2'-deoxyribonucleoside 5'-diphosphate + ATP = a 2'-deoxyribonucleoside 5'-triphosphate + ADP. The enzyme catalyses a ribonucleoside 5'-diphosphate + ATP = a ribonucleoside 5'-triphosphate + ADP. Functionally, major role in the synthesis of nucleoside triphosphates other than ATP. The ATP gamma phosphate is transferred to the NDP beta phosphate via a ping-pong mechanism, using a phosphorylated active-site intermediate. This chain is Nucleoside diphosphate kinase, found in Nitratidesulfovibrio vulgaris (strain ATCC 29579 / DSM 644 / CCUG 34227 / NCIMB 8303 / VKM B-1760 / Hildenborough) (Desulfovibrio vulgaris).